The chain runs to 827 residues: Discs large homolog 1-like protein (827 aa).

2 disordered regions span residues 38–61 and 102–133; these read HQDEDTGSPQEPSSPQFTDDTPGP and SPVVKEESPPSPSTPLSNPYPQSPVSVQANPP. Residues 44-56 show a composition bias toward polar residues; that stretch reads GSPQEPSSPQFTD. PDZ domains follow at residues 159–246, 254–341, and 403–484; these read EITL…RRRK, EIKL…AKPN, and KVVL…QYRP. An SH3 domain is found at 518-588; sequence KRSLYVRALF…PSKRRVEKKE (71 aa). The tract at residues 595–618 is disordered; it reads VKFNSKSREKGDNPDDMLSKGQSG. Residues 637–812 enclose the Guanylate kinase-like domain; sequence SRPVIILGPM…IYDQVKQIIE (176 aa).

The protein belongs to the MAGUK family.

The protein localises to the membrane. In terms of biological role, may play a role in synapse assembly and function. In Danio rerio (Zebrafish), this protein is Discs large homolog 1-like protein (dlg1l).